The primary structure comprises 146 residues: Hemoglobin subunit beta (146 aa).

Val1 is subject to N-acetylvaline. In terms of domain architecture, Globin spans 2–146 (HLTGEEKAAV…VATALAHKYH (145 aa)). Thr12 carries the post-translational modification Phosphothreonine. Ser44 is modified (phosphoserine). An N6-acetyllysine modification is found at Lys59. Heme b is bound at residue His63. N6-acetyllysine is present on Lys82. His92 provides a ligand contact to heme b. Cys93 is modified (S-nitrosocysteine). Lys144 is modified (N6-acetyllysine).

It belongs to the globin family. In terms of assembly, heterotetramer of two alpha chains and two beta chains. As to expression, red blood cells.

Involved in oxygen transport from the lung to the various peripheral tissues. This Macroderma gigas (Australian ghost bat) protein is Hemoglobin subunit beta (HBB).